Consider the following 64-residue polypeptide: Large ribosomal subunit protein bL32 (64 aa).

Positions 1–35 (MAVQKSRVTPSRRGQRRSHDALTAKQLSTDPTSGE) are disordered.

This sequence belongs to the bacterial ribosomal protein bL32 family.

This chain is Large ribosomal subunit protein bL32, found in Xanthomonas axonopodis pv. citri (strain 306).